We begin with the raw amino-acid sequence, 244 residues long: Demethylmenaquinone methyltransferase (244 aa).

S-adenosyl-L-methionine-binding positions include T65, D86, and 114-115 (DA).

It belongs to the class I-like SAM-binding methyltransferase superfamily. MenG/UbiE family.

The catalysed reaction is a 2-demethylmenaquinol + S-adenosyl-L-methionine = a menaquinol + S-adenosyl-L-homocysteine + H(+). Its pathway is quinol/quinone metabolism; menaquinone biosynthesis; menaquinol from 1,4-dihydroxy-2-naphthoate: step 2/2. In terms of biological role, methyltransferase required for the conversion of demethylmenaquinol (DMKH2) to menaquinol (MKH2). This Lactobacillus johnsonii (strain CNCM I-12250 / La1 / NCC 533) protein is Demethylmenaquinone methyltransferase.